The primary structure comprises 483 residues: MLTLDTLNTMLAVSEEGMVEEMILALLASPQLVIFFEKFPRLKNAVTADLPRWREALRSRLKDARVPPELTEEVMCYQQSQLLSTPQFIVQLPQILALLHRLHSPYTAQAKQLTESNSTFTPALHTLFLQRWRLSLVVQATTLNQQLLEEEREQLLSDVQERMTLSGQLEPTLAENDNAAGRLWDMSAGQLKRGDYQLIVKYGEFLAAQPELMQLAEQLGRSREAKSVPKKDAPMETFRTLVREPATVPEQVDGIQQGDDILRLLPPELATLGITELEYEFYRRLVEKQLLTYRLHGEAWREKVTERPVVHQDVDEQPRGPFIVCVDTSGSMGGFNEQCAKAFCLALMRVALADNRRCFIMLFSTDVVRYELSGPEGIEQAIRFLSQRFRGGTDIASCFRAIIERMQGREWFDADAVVISDFIAQRLPDDVVSKVGELQRLHQHRFHAVAMSAHGKPGIMRIFDHIWRFDTGMRSRLLRRWRR.

This sequence belongs to the ViaA family. In terms of assembly, homodimer. Interacts with RavA.

Its subcellular location is the cytoplasm. In terms of biological role, component of the RavA-ViaA chaperone complex, which may act on the membrane to optimize the function of some of the respiratory chains. ViaA stimulates the ATPase activity of RavA. This is Regulatory protein ViaA from Salmonella agona (strain SL483).